The chain runs to 186 residues: Lipid A palmitoyltransferase PagP (186 aa).

Residues 1–25 (MKVSKYVAIFFFVFIQLISVGKVFA) form the signal peptide. Catalysis depends on residues His-58, Asp-101, and Ser-102.

It belongs to the lipid A palmitoyltransferase family. As to quaternary structure, homodimer.

The protein localises to the cell outer membrane. The enzyme catalyses lipid A (E. coli) + a 1-hexadecanoyl-2-acyl-sn-glycero-3-phosphocholine = hepta-acyl lipid A (E. coli) + a 2-acyl-sn-glycero-3-phosphocholine. It carries out the reaction lipid IIA + a 1-hexadecanoyl-2-acyl-sn-glycero-3-phosphocholine = lipid IIB + a 2-acyl-sn-glycero-3-phosphocholine. The catalysed reaction is lipid IVA (E. coli) + a 1-hexadecanoyl-2-acyl-sn-glycero-3-phosphocholine = lipid IVB (E. coli) + a 2-acyl-sn-glycero-3-phosphocholine. Its function is as follows. Transfers a palmitate residue from the sn-1 position of a phospholipid to the N-linked hydroxymyristate on the proximal unit of lipid A or its precursors. This is Lipid A palmitoyltransferase PagP from Escherichia coli O6:K15:H31 (strain 536 / UPEC).